Consider the following 207-residue polypeptide: Small ribosomal subunit protein uS4c (207 aa).

Residues Met92–Lys153 form the S4 RNA-binding domain.

Belongs to the universal ribosomal protein uS4 family. Part of the 30S ribosomal subunit. Contacts protein S5. The interaction surface between S4 and S5 is involved in control of translational fidelity.

The protein resides in the plastid. It localises to the chloroplast. In terms of biological role, one of the primary rRNA binding proteins, it binds directly to 16S rRNA where it nucleates assembly of the body of the 30S subunit. Its function is as follows. With S5 and S12 plays an important role in translational accuracy. This chain is Small ribosomal subunit protein uS4c (rps4), found in Equisetum hyemale (Dutch rush).